Consider the following 389-residue polypeptide: Na(+)/H(+) antiporter NhaA (389 aa).

11 helical membrane-spanning segments follow: residues 14 to 34 (AGGI…NSPL), 59 to 79 (LILW…GLEV), 95 to 115 (SLPT…YLLF), 124 to 144 (AGWA…MALL), 154 to 174 (VFLL…IALF), 177 to 197 (TDLS…LVGL), 213 to 233 (LILW…GVII), 257 to 277 (PWST…VYVG), 292 to 312 (IALG…YIAV), 328 to 348 (IAPV…IASL), and 363 to 383 (LGTL…LSKV).

It belongs to the NhaA Na(+)/H(+) (TC 2.A.33) antiporter family.

The protein resides in the cell inner membrane. The enzyme catalyses Na(+)(in) + 2 H(+)(out) = Na(+)(out) + 2 H(+)(in). In terms of biological role, na(+)/H(+) antiporter that extrudes sodium in exchange for external protons. This Shewanella baltica (strain OS223) protein is Na(+)/H(+) antiporter NhaA.